A 415-amino-acid chain; its full sequence is Casein kinase I isoform delta (415 aa).

The 269-residue stretch at 9–277 (YRLGRKIGSG…YLRQLFRNLF (269 aa)) folds into the Protein kinase domain. ATP is bound by residues 15–23 (IGSGSFGDI) and lysine 38. Aspartate 128 serves as the catalytic Proton acceptor. Residues 301-315 (AEDAERERREREERL) are compositionally biased toward basic and acidic residues. A disordered region spans residues 301 to 415 (AEDAERERRE…SSGLPSTVHR (115 aa)). Residues 317–342 (HTRNPAVRGLPSTASGRLRGTQEVTP) form an autoinhibitory region. Low complexity predominate over residues 341 to 352 (TPSTPLTPTSHT). Residues 380–415 (NVSSSDLTSRQDTSRMSTSQIPSRVTSSGLPSTVHR) are compositionally biased toward polar residues.

It belongs to the protein kinase superfamily. As to quaternary structure, monomer. Interacts with per1 and per2. Component of the circadian core oscillator. In terms of processing, autophosphorylated on serine and threonine residues. In terms of tissue distribution, detected in retina photoreceptor cells.

Its subcellular location is the cytoplasm. The protein resides in the nucleus. The enzyme catalyses L-seryl-[protein] + ATP = O-phospho-L-seryl-[protein] + ADP + H(+). It catalyses the reaction L-threonyl-[protein] + ATP = O-phospho-L-threonyl-[protein] + ADP + H(+). The catalysed reaction is L-seryl-[tau protein] + ATP = O-phospho-L-seryl-[tau protein] + ADP + H(+). It carries out the reaction L-threonyl-[tau protein] + ATP = O-phospho-L-threonyl-[tau protein] + ADP + H(+). With respect to regulation, exhibits substrate-dependent heparin activation. Its function is as follows. Casein kinases are operationally defined by their preferential utilization of acidic proteins such as caseins as substrates. Can phosphorylate a large number of proteins. Central component of the circadian clock. May act as a negative regulator of circadian rhythmicity by phosphorylating per1 and per2, which may lead to their degradation. Participates in wnt signaling. In terms of biological role, has no kinase activity. The protein is Casein kinase I isoform delta (csnk1d) of Xenopus laevis (African clawed frog).